The following is a 39-amino-acid chain: Potassium channel toxin alpha-KTx 2.23 (39 aa).

3 cysteine pairs are disulfide-bonded: Cys7/Cys29, Cys13/Cys34, and Cys17/Cys36.

In terms of tissue distribution, expressed by the venom gland.

It localises to the secreted. In terms of biological role, blocks human voltage-gated potassium (Kv) channels Kv1.1/KCNA1, Kv1.2/KCNA2 and Kv1.3/KCNA3. This is Potassium channel toxin alpha-KTx 2.23 from Centruroides bonito (Scorpion).